A 533-amino-acid chain; its full sequence is Malate synthase A (533 aa).

The Proton acceptor role is filled by Arg-166. Catalysis depends on Asp-447, which acts as the Proton donor.

The protein belongs to the malate synthase family.

Its subcellular location is the cytoplasm. It catalyses the reaction glyoxylate + acetyl-CoA + H2O = (S)-malate + CoA + H(+). It functions in the pathway carbohydrate metabolism; glyoxylate cycle; (S)-malate from isocitrate: step 2/2. The chain is Malate synthase A (aceB) from Escherichia coli (strain K12).